Consider the following 431-residue polypeptide: Acrosin (431 aa).

The signal sequence occupies residues 1 to 16; the sequence is MLPTAVLLVLVVSVVA. N-linked (GlcNAc...) asparagine glycosylation is present at Asn19. Intrachain disulfides connect Cys22-Cys152, Cys26-Cys160, Cys71-Cys87, Cys175-Cys244, Cys207-Cys223, and Cys234-Cys264. Positions 40–288 constitute a Peptidase S1 domain; sequence VVGGQAAQQG…FLDWIASRIG (249 aa). Catalysis depends on charge relay system residues His86 and Asp140. Asn208 carries an N-linked (GlcNAc...) asparagine glycan. Ser238 functions as the Charge relay system in the catalytic mechanism. Residues 295–385 are disordered; it reads IQPATPTPPT…PPPASTKPPQ (91 aa). Residues 331-341 are compositionally biased toward basic residues; it reads PHPHPHPHPHP. A compositionally biased stretch (pro residues) spans 342-381; sequence RPPQPPAAQAPPPPPPPPPPPPPPPPPPPPPPPPPPPAST. Positions 351–431 are cleaved as a propeptide — pro-rich; the sequence is APPPPPPPPP…TEIPEVTLAS (81 aa).

This sequence belongs to the peptidase S1 family. As to quaternary structure, heavy chain (catalytic) and a light chain linked by two disulfide bonds. Forms a heterodimer with SERPINA5.

The enzyme catalyses Preferential cleavage: Arg-|-Xaa, Lys-|-Xaa.. Its activity is regulated as follows. Inhibited by SERPINA5. Its function is as follows. Acrosin is the major protease of mammalian spermatozoa. It is a serine protease of trypsin-like cleavage specificity, it is synthesized in a zymogen form, proacrosin and stored in the acrosome. The sequence is that of Acrosin (ACR) from Oryctolagus cuniculus (Rabbit).